Reading from the N-terminus, the 505-residue chain is MAAENSKQFWKRSAKLPGSIQPVYGAQHPPLDPRLTKNFIKERSKVNTVPLKNKKASSFHEFARNTSDAWDIGDDEEEDFSSPSFQTLNSKVALATAAQVLENHSKLRVKPERSQSTTSDVPANYKVIKSSSDAQLSRNSSDTCLRNPLHKQQSLPLRPIIPLVARISDQNASGAPPMTVREKTRLEKFRQLLSSQNTDLDELRKCSWPGVPREVRPITWRLLSGYLPANTERRKLTLQRKREEYFGFIEQYYDSRNEEHHQDTYRQIHIDIPRTNPLIPLFQQPLVQEIFERILFIWAIRHPASGYVQGINDLVTPFFVVFLSEYVEEDVENFDVTNLSQDMLRSIEADSFWCMSKLLDGIQDNYTFAQPGIQKKVKALEELVSRIDEQVHNHFRRYEVEYLQFAFRWMNNLLMRELPLRCTIRLWDTYQSEPEGFSHFHLYVCAAFLIKWRKEILDEEDFQGLLMLLQNLPTIHWGNEEIGLLLAEAYRLKYMFADAPNHYRR.

N-acetylalanine is present on alanine 2. Phosphoserine is present on residues serine 58 and serine 116. Residues 105-146 (SKLRVKPERSQSTTSDVPANYKVIKSSSDAQLSRNSSDTCLR) are disordered. Positions 129–146 (KSSSDAQLSRNSSDTCLR) are enriched in polar residues. Serine 154 is subject to Phosphoserine. The 225-residue stretch at 210-434 (GVPREVRPIT…RLWDTYQSEP (225 aa)) folds into the Rab-GAP TBC domain.

In terms of assembly, interacts with ACBD3 and ARFGEF1. Interacts with YWHAB, YWHAE, YWHAG, YWHAH, YWHAQ and YWHAZ.

In terms of biological role, may act as a GTPase-activating protein for Rab family protein(s). The chain is TBC1 domain family member 22B (TBC1D22B) from Homo sapiens (Human).